Here is a 287-residue protein sequence, read N- to C-terminus: GTPase Era (287 aa).

Residues R11–E174 enclose the Era-type G domain. GTP contacts are provided by residues G19 to S26 and D66 to I70. The region spanning L205–R273 is the KH type-2 domain.

Belongs to the TRAFAC class TrmE-Era-EngA-EngB-Septin-like GTPase superfamily. Era GTPase family. Monomer.

The protein localises to the cytoplasm. It localises to the cell membrane. Its function is as follows. An essential GTPase that binds both GDP and GTP, with rapid nucleotide exchange. Plays a role in 16S rRNA processing and 30S ribosomal subunit biogenesis and possibly also in cell cycle regulation and energy metabolism. This Acidimicrobium ferrooxidans (strain DSM 10331 / JCM 15462 / NBRC 103882 / ICP) protein is GTPase Era.